The following is a 505-amino-acid chain: MVHLASIVSDLGFWPTVAGTVATYLFYQIVATVYDVYFGPMSNIPGPKLWAASHIPYILMLWNGEDASTKLALHEKYGPVVRVSPTELSYREAQAWKDIYGHQTRGKKSFPKDSRFYAPAVNGAPSILNADDPTHTRHRRILAHAFSDKALKEQEPLLKKWSDMLVSKLKENVEKSPSTPLDLVSWFNFTTFDIMADLTFAEPLYMLEGSTYSPWVRTIFGSLKLGSRLRAVRILPGMTTFINMIMPNSMRQKQVEHFKYSADRVDKRLANKNLDRPDLWAQVLKRVDVDGMSMSVAEMHSNSAIFMLAGTETTATLLSGLTYHLLQNPATMSKLVNEVRSTFPTRDDINVETLQRLPYLNACLEEGMRMYPPVATGLPRLTPKGGAAICGTWIPEDVAVSVSQWSTYQCEENFHKAKLFIPERWMGEDEQFANDNHAAFQPFSTGPRNCIGRNLAYHEARLLLCEVLWNFDLTLDEKSEDWLNQPVFTVWEKDPLWVRLQVASR.

Residues 12-34 form a helical membrane-spanning segment; sequence GFWPTVAGTVATYLFYQIVATVY. A heme-binding site is contributed by Cys-450.

The protein belongs to the cytochrome P450 family. Heme serves as cofactor.

It localises to the membrane. Its pathway is secondary metabolite biosynthesis; terpenoid biosynthesis. Cytochrome P450 monooxygenase; part of the gene cluster that mediates the biosynthesis of enfumafungin, a glycosylated fernene-type triterpenoid with potent antifungal activity, mediated by its interaction with beta-1,3-glucan synthase and the fungal cell wall. The pathway begins with the terpene cyclase-glycosyl transferase fusion protein that most likely uses 2,3-oxidosqualene as substrate and catalyzes glycosylation immediately after cyclization. The fernene glycoside then could be processed by the desaturase efuI which catalyzes isomerization of a double bond established by efuA to form the core structure. The latter would then undergo a series of hydroxylations in unknown order at C-2, C-19, C-23 and C-25, which would be catalyzed by two of the three cytochrome P450 monooxygenases efuB, efuG or efuH. The hydroxy-group at C-25 becomes oxidized by the dehydrogenase efuE to enable a spontaneous, non-enzymatic hemiacetal formation with C-23. After hydroxylation at C-2, acetylation by the acetyltransferase efuC takes place. The final steps in enfumafungin biosynthesis require expansion of the 5-membered ring by lactonization via a Baeyer-Villiger reaction mediated by one of the BGC's cytochrome P450 monooxygenases (efuB, efuG or efuH) followed by ring cleavage. This type of reaction would establish a double bond between C-20 and C-21 which could be reduced by the reductase efuL to form the final product. In Hormonema carpetanum, this protein is Cytochrome P450 monooxygenase efuB.